Reading from the N-terminus, the 478-residue chain is Odorant receptor coreceptor (478 aa).

Topologically, residues Met1–Tyr43 are cytoplasmic. Residues Ser44–Met64 traverse the membrane as a helical segment. Residues Asn65–Thr73 lie on the Extracellular side of the membrane. Residues Ala74–Val94 form a helical membrane-spanning segment. The Cytoplasmic portion of the chain corresponds to Asn95 to Leu133. A helical membrane pass occupies residues Leu134–Phe154. Residues Gly155–Ala187 lie on the Extracellular side of the membrane. Asn167 is a glycosylation site (N-linked (GlcNAc...) asparagine). Residues Met188–Met208 traverse the membrane as a helical segment. Residues Cys209–Leu343 lie on the Cytoplasmic side of the membrane. A helical membrane pass occupies residues Val344 to Ile364. The Extracellular segment spans residues Lys365 to Tyr382. The chain crosses the membrane as a helical span at residues Gly383–Phe403. Over Gly404–Thr454 the chain is Cytoplasmic. A helical membrane pass occupies residues Val455–Val475. Residues Gln476 to Lys478 lie on the Extracellular side of the membrane.

This sequence belongs to the insect chemoreceptor superfamily. Heteromeric odorant receptor channel (TC 1.A.69) family. Orco subfamily. As to quaternary structure, heterodimer with conventional odorant receptors (ORs). Complexes exist early in the endomembrane system in olfactory sensory neurons (OSNs), coupling these complexes to the conserved ciliary trafficking pathway. As to expression, found specifically within most antennal and maxillary palp sensilla, as well as in a subset of proboscis sensilla.

The protein resides in the cell membrane. In terms of biological role, odorant coreceptor which complexes with conventional odorant receptors (ORs) to form odorant-sensing units, providing sensitive and prolonged odorant signaling and calcium permeability. Orco is a universal and integral part of the functional odorant receptor, involved in the dendritic localization of other olfactory receptors. Plays a key role in preferred attraction of females for humans over non-human hosts for blood feeding. Human attraction plays a crucial role in the transmission of dengue and yellow fever by the mosquito. Also required for the response to the insect repellent IR3535; or to N,N-Diethyl-meta-toluamide (DEET), the most widely used insect repellent worldwide. This Aedes aegypti (Yellowfever mosquito) protein is Odorant receptor coreceptor (SGPRor7).